The primary structure comprises 250 residues: Zinc finger protein lsy-27 (250 aa).

2 consecutive C2H2-type zinc fingers follow at residues 25 to 48 and 52 to 75; these read FVCS…QLMH and HTCM…RNEH. Residues 81-104 form a C2H2-type 3; degenerate zinc finger; the sequence is FTCGCCNWTFASKRQLTEHTKCIQ. Disordered stretches follow at residues 126-177 and 226-250; these read IQST…EAER and QKVK…QEIE. Over residues 148–165 the composition is skewed to low complexity; sequence SLSPSSSVSTSISSRDAS. Residues 239–250 are compositionally biased toward basic and acidic residues; that stretch reads MIPEKHVKQEIE.

Functionally, involved in regulating left/right asymmetric differentiation of the gustatory ASE neurons. Plays a role in modulating expression of LIM/homeobox protein lim-6. The polypeptide is Zinc finger protein lsy-27 (Caenorhabditis elegans).